Reading from the N-terminus, the 548-residue chain is Membrane protein insertase YidC (548 aa).

The helical transmembrane segment at 6–26 (NLLVIALLFVSFMIWQAWEQD) threads the bilayer. The interval 28–56 (NPQPQTQQTTQTTTTAAGSAADQGVPASG) is disordered. The span at 29–42 (PQPQTQQTTQTTTT) shows a compositional bias: low complexity. 4 helical membrane passes run 350-370 (FVGNWGFSIIIITFIVRGIMY), 424-444 (FPLIIQMPIFLALYYMLMGSI), 458-478 (LSAQDPYYILPILMGVTMFFI), and 499-519 (PVIFTVFFLWFPSGLVLYYIV).

Belongs to the OXA1/ALB3/YidC family. Type 1 subfamily. As to quaternary structure, interacts with the Sec translocase complex via SecD. Specifically interacts with transmembrane segments of nascent integral membrane proteins during membrane integration.

It localises to the cell inner membrane. In terms of biological role, required for the insertion and/or proper folding and/or complex formation of integral membrane proteins into the membrane. Involved in integration of membrane proteins that insert both dependently and independently of the Sec translocase complex, as well as at least some lipoproteins. Aids folding of multispanning membrane proteins. In Salmonella choleraesuis (strain SC-B67), this protein is Membrane protein insertase YidC.